A 123-amino-acid chain; its full sequence is Large ribosomal subunit protein uL18 (123 aa).

Belongs to the universal ribosomal protein uL18 family. As to quaternary structure, part of the 50S ribosomal subunit; part of the 5S rRNA/L5/L18/L25 subcomplex. Contacts the 5S and 23S rRNAs.

In terms of biological role, this is one of the proteins that bind and probably mediate the attachment of the 5S RNA into the large ribosomal subunit, where it forms part of the central protuberance. The chain is Large ribosomal subunit protein uL18 from Symbiobacterium thermophilum (strain DSM 24528 / JCM 14929 / IAM 14863 / T).